Consider the following 183-residue polypeptide: CASP-like protein UU2 (183 aa).

Residues 1-33 (MEESQQQSSKFDAPPSPYVPSRVYLAQIYWKKP) are Cytoplasmic-facing. Residues 34 to 54 (AIVVLRVLQFIFSLIAFSVMA) form a helical membrane-spanning segment. At 55-72 (DVLHDVQGSIKSLSYTVA) the chain is on the extracellular side. A helical transmembrane segment spans residues 73-93 (IGVLACAYALAQLSFSLWCVI). Residues 94–118 (RGATSSAGVTPLYQYATFICDQMST) lie on the Cytoplasmic side of the membrane. The chain crosses the membrane as a helical span at residues 119–139 (YFLISAASATATLIDVSGVCG). Over 140-156 (SNGSGTNLCSRSTASVT) the chain is Extracellular. An N-linked (GlcNAc...) asparagine glycan is attached at Asn141. The helical transmembrane segment at 157 to 177 (FAFLAFLAFSASSVLTGYYLV) threads the bilayer. Topologically, residues 178-183 (KCILKA) are cytoplasmic.

Belongs to the Casparian strip membrane proteins (CASP) family. As to quaternary structure, homodimer and heterodimers.

It is found in the cell membrane. The chain is CASP-like protein UU2 from Selaginella moellendorffii (Spikemoss).